Reading from the N-terminus, the 502-residue chain is Hippocampus abundant transcript-like protein 1 (502 aa).

Residues 1-12 show a composition bias toward basic and acidic residues; the sequence is MNAEPPEEKAAS. The segment at 1–27 is disordered; sequence MNAEPPEEKAASEAEAGAMPEKRAGSR. At 1–46 the chain is on the extracellular side; that stretch reads MNAEPPEEKAASEAEAGAMPEKRAGSRAAGGNSLQGFGRPSVYHAA. The helical transmembrane segment at 47–67 threads the bilayer; that stretch reads IVIFLEFFAWGLLTTSMLTVL. Residues 68 to 79 lie on the Cytoplasmic side of the membrane; it reads HETFPQHTFLMN. The helical transmembrane segment at 80 to 100 threads the bilayer; the sequence is GLIQGVKGLLSFLSAPLIGAL. Topologically, residues 101-108 are extracellular; sequence SDVWGRKP. The helical transmembrane segment at 109–129 threads the bilayer; the sequence is FLLGTVFFTCFPIPLMRISPW. The Cytoplasmic portion of the chain corresponds to 130-131; it reads WY. The chain crosses the membrane as a helical span at residues 132-152; it reads FAMISISGVFSVTFSVIFAYV. The Extracellular portion of the chain corresponds to 153-165; sequence ADVTQEHERSTAY. A helical transmembrane segment spans residues 166–186; it reads GWVSATFAASLVSSPAIGAYL. Topologically, residues 187 to 193 are cytoplasmic; sequence SASYGDS. The chain crosses the membrane as a helical span at residues 194 to 214; it reads LVVLVATVVALLDICFILLAV. Residues 215–248 are Extracellular-facing; that stretch reads PESLPEKMRPLSWGARISWKQADPFASLKKVGKD. The chain crosses the membrane as a helical span at residues 249 to 269; sequence STILLICITVFLSYLPEAGQY. At 270–278 the chain is on the cytoplasmic side; it reads SSFFLYLRQ. The chain crosses the membrane as a helical span at residues 279–299; it reads VIGFGSIKIAAFIAMVGILSI. Topologically, residues 300-316 are extracellular; the sequence is VAQTVFLTSLMRSLGNK. Residues 317-337 form a helical membrane-spanning segment; that stretch reads NTVLLGLGFQMFQLAWYGFGS. Residue Q338 is a topological domain, cytoplasmic. Residues 339–359 form a helical membrane-spanning segment; the sequence is AWMMWAAGIVAAVSSITFPAV. Over 360 to 384 the chain is Extracellular; that stretch reads STLVSQNADSNQQGVAQGIITGIRG. A helical transmembrane segment spans residues 385–405; it reads LCNGLGPALYGFIFYMFHVEL. Over 406-425 the chain is Cytoplasmic; that stretch reads TELEPELISNNAALQGAVIP. Residues 426–446 form a helical membrane-spanning segment; sequence GPPFLFGACIVFMSFLVAVFI. At 447 to 502 the chain is on the extracellular side; it reads PEYSKGGIQKHSNSISGSLANTPERGSDEDIEPLLQDSSIWELSSLEEPGHQCTEL.

This sequence belongs to the major facilitator superfamily.

It is found in the membrane. This Bos taurus (Bovine) protein is Hippocampus abundant transcript-like protein 1.